The following is a 181-amino-acid chain: Cyclic AMP-dependent transcription factor ATF-3 (181 aa).

Lysine 78 is covalently cross-linked (Glycyl lysine isopeptide (Lys-Gly) (interchain with G-Cter in SUMO2)). The 64-residue stretch at 86–149 (DERKKRRRER…QHLIYMLNLH (64 aa)) folds into the bZIP domain. Residues 88–110 (RKKRRRERNKIAAAKCRNKKKEK) are basic motif. The tract at residues 114-142 (LQKESEKLESVNAELKAQIEELKNEKQHL) is leucine-zipper. Phosphothreonine is present on threonine 162. A Glycyl lysine isopeptide (Lys-Gly) (interchain with G-Cter in SUMO2) cross-link involves residue lysine 175.

The protein belongs to the bZIP family. ATF subfamily. As to quaternary structure, binds DNA as a homodimer or a heterodimer. Interacts with KAT5; promoting KAT5 autoacetylation and KAT5 deubiquitination by USP7.

The protein localises to the nucleus. This protein binds the cAMP response element (CRE) (consensus: 5'-GTGACGT[AC][AG]-3'), a sequence present in many viral and cellular promoters. Represses transcription from promoters with ATF sites. It may repress transcription by stabilizing the binding of inhibitory cofactors at the promoter. Its function is as follows. Activates transcription presumably by sequestering inhibitory cofactors away from the promoters. In terms of biological role, stress-induced isoform, counteracts the transcriptional repression of isoform 1. This is Cyclic AMP-dependent transcription factor ATF-3 from Homo sapiens (Human).